We begin with the raw amino-acid sequence, 189 residues long: Thymidine kinase (189 aa).

ATP is bound by residues 9-16 (GTMNSGKT) and 85-88 (DESQ). Glu86 functions as the Proton acceptor in the catalytic mechanism. Positions 143, 146, 180, and 183 each coordinate Zn(2+).

This sequence belongs to the thymidine kinase family. As to quaternary structure, homotetramer.

It localises to the cytoplasm. It catalyses the reaction thymidine + ATP = dTMP + ADP + H(+). This Streptococcus pyogenes serotype M3 (strain ATCC BAA-595 / MGAS315) protein is Thymidine kinase.